A 182-amino-acid polypeptide reads, in one-letter code: Ribosome-recycling factor (182 aa).

This sequence belongs to the RRF family.

Its subcellular location is the cytoplasm. In terms of biological role, responsible for the release of ribosomes from messenger RNA at the termination of protein biosynthesis. May increase the efficiency of translation by recycling ribosomes from one round of translation to another. This is Ribosome-recycling factor from Prochlorococcus marinus (strain MIT 9313).